The following is a 25-amino-acid chain: ATP synthase subunit alpha, mitochondrial (25 aa).

It belongs to the ATPase alpha/beta chains family. F-type ATPases have 2 components, CF(1) - the catalytic core - and CF(0) - the membrane proton channel. CF(1) has five subunits: alpha(3), beta(3), gamma(1), delta(1), epsilon(1). CF(0) has three main subunits: a, b and c.

Its subcellular location is the mitochondrion. The protein localises to the mitochondrion inner membrane. Its function is as follows. Mitochondrial membrane ATP synthase (F(1)F(0) ATP synthase or Complex V) produces ATP from ADP in the presence of a proton gradient across the membrane which is generated by electron transport complexes of the respiratory chain. F-type ATPases consist of two structural domains, F(1) - containing the extramembraneous catalytic core, and F(0) - containing the membrane proton channel, linked together by a central stalk and a peripheral stalk. During catalysis, ATP synthesis in the catalytic domain of F(1) is coupled via a rotary mechanism of the central stalk subunits to proton translocation. Subunits alpha and beta form the catalytic core in F(1). Rotation of the central stalk against the surrounding alpha(3)beta(3) subunits leads to hydrolysis of ATP in three separate catalytic sites on the beta subunits. Subunit alpha does not bear the catalytic high-affinity ATP-binding sites. In Spinacia oleracea (Spinach), this protein is ATP synthase subunit alpha, mitochondrial (ATPA).